Consider the following 630-residue polypeptide: Scarecrow-like protein 34 (630 aa).

The 389-residue stretch at 240–628 (KKKKSQVVDF…RTLYASSCWV (389 aa)) folds into the GRAS domain. The leucine repeat I (LRI) stretch occupies residues 247-312 (VDFRTLLTHC…GSTGPMIQTY (66 aa)). Residues 331–396 (YRVYLSSSPF…DVPRKLRITG (66 aa)) form a VHIID region. The VHIID motif lies at 362–366 (LHIVD). The interval 412-444 (ETGRRLAEYCKRFNVPFEYKAIASQNWETIRIE) is leucine repeat II (LRII). The segment at 454–549 (LAVNAGLRLK…REFYGREAMN (96 aa)) is PFYRE. The tract at residues 552–628 (ACEEADRVER…RTLYASSCWV (77 aa)) is SAW.

Belongs to the GRAS family.

Its subcellular location is the nucleus. Its function is as follows. Probable transcription factor involved in plant development. This is Scarecrow-like protein 34 (SCL34) from Arabidopsis thaliana (Mouse-ear cress).